Here is a 594-residue protein sequence, read N- to C-terminus: Aspartate--tRNA(Asp/Asn) ligase (594 aa).

Glu175 serves as a coordination point for L-aspartate. Positions 199–202 are aspartate; that stretch reads QQFK. L-aspartate contacts are provided by Arg221 and His455. 221-223 is an ATP binding site; the sequence is RDE. An ATP-binding site is contributed by Glu489. Arg496 contributes to the L-aspartate binding site. Position 541-544 (541-544) interacts with ATP; it reads GIDR.

The protein belongs to the class-II aminoacyl-tRNA synthetase family. Type 1 subfamily. In terms of assembly, homodimer.

Its subcellular location is the cytoplasm. The catalysed reaction is tRNA(Asx) + L-aspartate + ATP = L-aspartyl-tRNA(Asx) + AMP + diphosphate. Its function is as follows. Aspartyl-tRNA synthetase with relaxed tRNA specificity since it is able to aspartylate not only its cognate tRNA(Asp) but also tRNA(Asn). Reaction proceeds in two steps: L-aspartate is first activated by ATP to form Asp-AMP and then transferred to the acceptor end of tRNA(Asp/Asn). This Pelagibacter ubique (strain HTCC1062) protein is Aspartate--tRNA(Asp/Asn) ligase.